The sequence spans 358 residues: Peroxidase 12 (358 aa).

Residues 1–31 form the signal peptide; that stretch reads MTKAYSTRVLTFLILISLMAVTLNLFPTVEA. 4 disulfides stabilise this stretch: Cys-53–Cys-134, Cys-86–Cys-91, Cys-140–Cys-335, and Cys-220–Cys-247. His-84 acts as the Proton acceptor in catalysis. 5 residues coordinate Ca(2+): Asp-85, Val-88, Gly-90, Glu-92, and Ser-94. Residue Pro-183 participates in substrate binding. Residues Asn-188 and Asn-202 are each glycosylated (N-linked (GlcNAc...) asparagine). His-213 contributes to the heme b binding site. Thr-214 lines the Ca(2+) pocket. N-linked (GlcNAc...) asparagine glycosylation is present at Asn-251. The Ca(2+) site is built by Asp-259, Ser-262, and Asp-267. A glycan (N-linked (GlcNAc...) asparagine) is linked at Asn-334.

This sequence belongs to the peroxidase family. Classical plant (class III) peroxidase subfamily. Heme b serves as cofactor. The cofactor is Ca(2+). As to expression, expressed in roots and leaves.

Its subcellular location is the secreted. The protein localises to the vacuole. The catalysed reaction is 2 a phenolic donor + H2O2 = 2 a phenolic radical donor + 2 H2O. Its function is as follows. Removal of H(2)O(2), oxidation of toxic reductants, biosynthesis and degradation of lignin, suberization, auxin catabolism, response to environmental stresses such as wounding, pathogen attack and oxidative stress. These functions might be dependent on each isozyme/isoform in each plant tissue. In terms of biological role, exhibits a Ca(2+)-pectate binding affinity which could be interpreted in vivo as a specificity to interact with the pectic structure of the cell wall. This chain is Peroxidase 12 (PER12), found in Arabidopsis thaliana (Mouse-ear cress).